The chain runs to 85 residues: Putative septation protein SpoVG (85 aa).

It belongs to the SpoVG family.

Could be involved in septation. This Archaeoglobus fulgidus (strain ATCC 49558 / DSM 4304 / JCM 9628 / NBRC 100126 / VC-16) protein is Putative septation protein SpoVG.